We begin with the raw amino-acid sequence, 602 residues long: Pentatricopeptide repeat-containing protein At5g11310, mitochondrial (602 aa).

The transit peptide at 1-35 (MNSLFTAFRRNLLLNPNPHRNFFLHRLLSSSRRSS) directs the protein to the mitochondrion. PPR repeat units follow at residues 134 to 165 (SPSLFDSVVNSLCKAREFEIAWSLVFDRVRSD), 172 to 202 (SADTFIVLIRRYARAGMVQQAIRAFEFARSY), 211 to 241 (ELRLLEVLLDALCKEGHVREASMYLERIGGT), 249 to 283 (SVRIFNILLNGWFRSRKLKQAEKLWEEMKAMNVKP), 284 to 318 (TVVTYGTLIEGYCRMRRVQIAMEVLEEMKMAEMEI), 319 to 353 (NFMVFNPIIDGLGEAGRLSEALGMMERFFVCESGP), 354 to 388 (TIVTYNSLVKNFCKAGDLPGASKILKMMMTRGVDP), 389 to 423 (TTTTYNHFFKYFSKHNKTEEGMNLYFKLIEAGHSP), 424 to 458 (DRLTYHLILKMLCEDGKLSLAMQVNKEMKNRGIDP), 459 to 493 (DLLTTTMLIHLLCRLEMLEEAFEEFDNAVRRGIIP), and 494 to 528 (QYITFKMIDNGLRSKGMSDMAKRLSSLMSSLPHSK).

This sequence belongs to the PPR family. P subfamily.

The protein resides in the mitochondrion. The polypeptide is Pentatricopeptide repeat-containing protein At5g11310, mitochondrial (Arabidopsis thaliana (Mouse-ear cress)).